The following is a 601-amino-acid chain: tRNA 5-methylaminomethyl-2-thiouridine biosynthesis bifunctional protein MnmC (601 aa).

The segment at 1–237 is tRNA (mnm(5)s(2)U34)-methyltransferase; it reads MSDPTASPLI…KKQRLEAVAP (237 aa). An FAD-dependent cmnm(5)s(2)U34 oxidoreductase region spans residues 252–601; it reads IGGGIAGAAM…FSSRVATGAV (350 aa).

This sequence in the N-terminal section; belongs to the methyltransferase superfamily. tRNA (mnm(5)s(2)U34)-methyltransferase family. In the C-terminal section; belongs to the DAO family. It depends on FAD as a cofactor.

The protein localises to the cytoplasm. The enzyme catalyses 5-aminomethyl-2-thiouridine(34) in tRNA + S-adenosyl-L-methionine = 5-methylaminomethyl-2-thiouridine(34) in tRNA + S-adenosyl-L-homocysteine + H(+). Catalyzes the last two steps in the biosynthesis of 5-methylaminomethyl-2-thiouridine (mnm(5)s(2)U) at the wobble position (U34) in tRNA. Catalyzes the FAD-dependent demodification of cmnm(5)s(2)U34 to nm(5)s(2)U34, followed by the transfer of a methyl group from S-adenosyl-L-methionine to nm(5)s(2)U34, to form mnm(5)s(2)U34. The chain is tRNA 5-methylaminomethyl-2-thiouridine biosynthesis bifunctional protein MnmC from Caulobacter sp. (strain K31).